The chain runs to 209 residues: Pyroglutamyl-peptidase 1 (209 aa).

Active-site residues include E85, C149, and H168.

The protein belongs to the peptidase C15 family. Monomer.

It is found in the cytoplasm. It carries out the reaction Release of an N-terminal pyroglutamyl group from a polypeptide, the second amino acid generally not being Pro.. With respect to regulation, inhibited by transition metal ions including Ni(2+), Zn(2+), and Cu(2+) and by sulfhydryl-blocking agents. Its function is as follows. Removes 5-oxoproline from various penultimate amino acid residues except L-proline. The polypeptide is Pyroglutamyl-peptidase 1 (PGPEP1) (Homo sapiens (Human)).